Reading from the N-terminus, the 306-residue chain is Bifunctional protein FolD (306 aa).

Residues 164–166 (GRS), S189, and T230 contribute to the NADP(+) site.

It belongs to the tetrahydrofolate dehydrogenase/cyclohydrolase family. As to quaternary structure, homodimer.

The catalysed reaction is (6R)-5,10-methylene-5,6,7,8-tetrahydrofolate + NADP(+) = (6R)-5,10-methenyltetrahydrofolate + NADPH. It carries out the reaction (6R)-5,10-methenyltetrahydrofolate + H2O = (6R)-10-formyltetrahydrofolate + H(+). Its pathway is one-carbon metabolism; tetrahydrofolate interconversion. Its function is as follows. Catalyzes the oxidation of 5,10-methylenetetrahydrofolate to 5,10-methenyltetrahydrofolate and then the hydrolysis of 5,10-methenyltetrahydrofolate to 10-formyltetrahydrofolate. This Solibacter usitatus (strain Ellin6076) protein is Bifunctional protein FolD.